The chain runs to 73 residues: MKAEIHPDYHNITVVMTDGTEYVTRSTWGKEGDKMNLDIDPKSHPAWTGGTQQMLDRGGRVSRFQKKFSGFLK.

The segment covering 34-43 has biased composition (basic and acidic residues); it reads KMNLDIDPKS. Residues 34-54 form a disordered region; that stretch reads KMNLDIDPKSHPAWTGGTQQM.

This sequence belongs to the bacterial ribosomal protein bL31 family. Type A subfamily. In terms of assembly, part of the 50S ribosomal subunit.

Functionally, binds the 23S rRNA. The protein is Large ribosomal subunit protein bL31 of Rhodopseudomonas palustris (strain BisA53).